Here is a 122-residue protein sequence, read N- to C-terminus: Large ribosomal subunit protein uL14 (122 aa).

Belongs to the universal ribosomal protein uL14 family. Part of the 50S ribosomal subunit. Forms a cluster with proteins L3 and L19. In the 70S ribosome, L14 and L19 interact and together make contacts with the 16S rRNA in bridges B5 and B8.

Binds to 23S rRNA. Forms part of two intersubunit bridges in the 70S ribosome. The protein is Large ribosomal subunit protein uL14 of Azorhizobium caulinodans (strain ATCC 43989 / DSM 5975 / JCM 20966 / LMG 6465 / NBRC 14845 / NCIMB 13405 / ORS 571).